The primary structure comprises 61 residues: Metallothionein-2B (61 aa).

Met-1 bears the N-acetylmethionine mark. The interval 1–29 is beta; the sequence is MDPNCSCATGDSCTCASSCKCKECKCTSC. Residues Cys-5, Cys-7, Cys-13, Cys-15, Cys-19, Cys-21, Cys-24, Cys-26, Cys-29, Cys-33, Cys-34, Cys-36, Cys-37, Cys-41, Cys-44, Cys-48, Cys-50, Cys-57, Cys-59, and Cys-60 each contribute to the a divalent metal cation site. Residues 30 to 61 form an alpha region; it reads KKSCCSCCPAGCTKCAQGCICKGASDKCSCCA.

It belongs to the metallothionein superfamily. Type 1 family. Monomer.

In terms of biological role, metallothioneins have a high content of cysteine residues that bind various heavy metals; these proteins are transcriptionally regulated by both heavy metals and glucocorticoids. The chain is Metallothionein-2B from Oryctolagus cuniculus (Rabbit).